The following is a 161-amino-acid chain: Ribonuclease P protein component 2 (161 aa).

The protein belongs to the eukaryotic/archaeal RNase P protein component 2 family. As to quaternary structure, consists of a catalytic RNA component and at least 4-5 protein subunits.

Its subcellular location is the cytoplasm. It catalyses the reaction Endonucleolytic cleavage of RNA, removing 5'-extranucleotides from tRNA precursor.. In terms of biological role, part of ribonuclease P, a protein complex that generates mature tRNA molecules by cleaving their 5'-ends. This chain is Ribonuclease P protein component 2, found in Methanopyrus kandleri (strain AV19 / DSM 6324 / JCM 9639 / NBRC 100938).